The sequence spans 181 residues: Calmodulin-like protein 6 (181 aa).

EF-hand domains are found at residues 33–68 (EQIKEYKGVFEMFDEEGNGEVKTGELEWLMSLLGIN), 69–104 (PTKSELASMAKDVDRDNKGFFNCDGFLALMGVYHEK), 107–142 (NQESELRAAFRVFDKEGKGYIDWNTLKYVLMNAGEP), and 143–178 (LNEVEAEQMMKEADKDGDRTIDYEEFVAMMTGESFK). The Ca(2+) site is built by Asp156, Asp158, Asp160, Thr162, and Glu167.

It belongs to the calmodulin family. Calglandulin subfamily. In terms of tissue distribution, expressed in prostate, thymus, heart, skeleton muscle, bone marrow and ovary.

Its subcellular location is the cytoplasm. The protein localises to the nucleus. This Homo sapiens (Human) protein is Calmodulin-like protein 6 (CALML6).